Here is a 391-residue protein sequence, read N- to C-terminus: Large ribosomal subunit protein uL3 (391 aa).

The span at 1–10 (MSHRKFEAPR) shows a compositional bias: basic and acidic residues. The segment at 1–41 (MSHRKFEAPRHGSLGFRPRRRTRHHRGRCRSFPKDDPSKKP) is disordered. A compositionally biased stretch (basic residues) spans 17 to 31 (RPRRRTRHHRGRCRS).

This sequence belongs to the universal ribosomal protein uL3 family.

The protein resides in the cytoplasm. Its function is as follows. The L3 protein is a component of the large subunit of cytoplasmic ribosomes. In Tetrahymena thermophila, this protein is Large ribosomal subunit protein uL3 (RPL3).